Consider the following 237-residue polypeptide: MTKATPRRRRWRIGELAGATGVTVRTLHHYEHTGLLAASERTDGGHRMYDRESIQRVHQIRALRELGFSLQEIRRAMDGRTSLTDLLRKHLQRIEVQVARATQLRDRLRNMTTDGDVRVSVDQLPAALDAMSKVEKRPQPRPCTCALAADREERWRRIRNDLRHCMDRNEHPCSDRTKAVALEARTLISEIAGNDLTGSTILKVLARLSDPRSLAGWDPHLMQYLDSALVALGDQPH.

In terms of domain architecture, HTH merR-type spans 10–79 (RWRIGELAGA…LQEIRRAMDG (70 aa)). The segment at residues 13–32 (IGELAGATGVTVRTLHHYEH) is a DNA-binding region (H-T-H motif).

In terms of biological role, involved in genotype-specific nodulation of soybeans. In Bradyrhizobium sp. (strain NC92), this protein is Nodulation protein NolA (nolA).